The sequence spans 889 residues: Inter-alpha-trypsin inhibitor heavy chain H3 (889 aa).

The first 21 residues, Met-1–Gly-21, serve as a signal peptide directing secretion. Positions Phe-22–Arg-33 are excised as a propeptide. The region spanning Leu-29–Glu-158 is the VIT domain. Asn-91 carries N-linked (GlcNAc...) asparagine glycosylation. The 184-residue stretch at Asn-284 to Val-467 folds into the VWFA domain. Asn-580 carries N-linked (GlcNAc...) asparagine glycosylation. Asp-649 is modified (aspartate 1-(chondroitin 4-sulfate)-ester). Positions Pro-650–Phe-889 are excised as a propeptide.

It belongs to the ITIH family. As to quaternary structure, I-alpha-I plasma protease inhibitors are assembled from one or two heavy chains (HC) and one light chain, bikunin. Pre-alpha-inhibitor (P-alpha-I) is composed of ITIH3/HC3 and bikunin. In terms of processing, heavy chains are linked to bikunin via chondroitin 4-sulfate esterified to the alpha-carboxyl of the C-terminal aspartate after propeptide cleavage. Expressed in both liver and brain.

It is found in the secreted. Functionally, may act as a carrier of hyaluronan in serum or as a binding protein between hyaluronan and other matrix protein, including those on cell surfaces in tissues to regulate the localization, synthesis and degradation of hyaluronan which are essential to cells undergoing biological processes. This is Inter-alpha-trypsin inhibitor heavy chain H3 (Itih3) from Mus musculus (Mouse).